A 273-amino-acid chain; its full sequence is Undecaprenyl-diphosphatase (273 aa).

7 helical membrane passes run 6–26 (SLLVAAILGVVEGLTEFLPVS), 45–65 (AKTFEVVIQLGSILAVVVMFW), 90–110 (LTLIHILLGMIPAVVLGLLFH), 116–136 (LFNPINVMYALVVGGLLLIAA), 190–210 (YAASEFSFLLAVPMMMGATAL), 222–242 (GDIPMFAVGFITAFVVALVAI), and 252–272 (ISFIPFAIYRFIVAAAVYVVF).

It belongs to the UppP family.

It is found in the cell inner membrane. It carries out the reaction di-trans,octa-cis-undecaprenyl diphosphate + H2O = di-trans,octa-cis-undecaprenyl phosphate + phosphate + H(+). Catalyzes the dephosphorylation of undecaprenyl diphosphate (UPP). Confers resistance to bacitracin. The chain is Undecaprenyl-diphosphatase from Escherichia fergusonii (strain ATCC 35469 / DSM 13698 / CCUG 18766 / IAM 14443 / JCM 21226 / LMG 7866 / NBRC 102419 / NCTC 12128 / CDC 0568-73).